Here is a 282-residue protein sequence, read N- to C-terminus: Bis(5'-nucleosyl)-tetraphosphatase, symmetrical (282 aa).

This sequence belongs to the Ap4A hydrolase family.

The catalysed reaction is P(1),P(4)-bis(5'-adenosyl) tetraphosphate + H2O = 2 ADP + 2 H(+). Hydrolyzes diadenosine 5',5'''-P1,P4-tetraphosphate to yield ADP. The protein is Bis(5'-nucleosyl)-tetraphosphatase, symmetrical of Klebsiella pneumoniae subsp. pneumoniae (strain ATCC 700721 / MGH 78578).